Here is a 671-residue protein sequence, read N- to C-terminus: Gametogenetin-binding protein 2-like (671 aa).

2 disordered regions span residues 372-489 (REQK…ARVQ) and 532-562 (VRDS…SEVS). Residues 373 to 384 (EQKKLKKKKKKD) show a composition bias toward basic residues. Residues 385–395 (EKKNLLHRQCD) are compositionally biased toward basic and acidic residues. Positions 396–420 (DTEANESDEEEEELRNEELDLEEES) are enriched in acidic residues. Residues 455 to 472 (TKSKPKKQSKKKKQKKAA) show a composition bias toward basic residues. Polar residues-rich tracts occupy residues 476–486 (MGNQKQMQATA) and 546–557 (GSRTSSAISSPE).

The sequence is that of Gametogenetin-binding protein 2-like from Drosophila melanogaster (Fruit fly).